A 62-amino-acid chain; its full sequence is Potassium channel toxin kappa-KTx 1.4 (62 aa).

Residues 1–26 (MKSCLINVSLLILLLLPILGYASVNA) form the signal peptide. Residues 27–38 (ESIDGENDFEEE) constitute a propeptide that is removed on maturation. Intrachain disulfides connect C43–C61 and C47–C57.

It belongs to the short scorpion toxin superfamily. Potassium channel inhibitor kappa-KTx family. Kappa-KTx 1 subfamily. Expressed by the venom gland.

Its subcellular location is the secreted. Shows structural homology with WaTx suggesting that it acts as a cell-penetrating peptide (CPP) with defensive purpose that induces pain by specifically activating mammalian sensory neuron TRPA1 channels. Has no effect on the voltage-gated potassium channels tested. The protein is Potassium channel toxin kappa-KTx 1.4 of Heterometrus petersii (Asian forest scorpion).